Reading from the N-terminus, the 379-residue chain is Alkanesulfonate monooxygenase (379 aa).

It belongs to the SsuD family.

The enzyme catalyses an alkanesulfonate + FMNH2 + O2 = an aldehyde + FMN + sulfite + H2O + 2 H(+). Functionally, catalyzes the desulfonation of aliphatic sulfonates. This is Alkanesulfonate monooxygenase from Pseudomonas savastanoi pv. phaseolicola (strain 1448A / Race 6) (Pseudomonas syringae pv. phaseolicola (strain 1448A / Race 6)).